Here is a 408-residue protein sequence, read N- to C-terminus: Voltage-gated potassium channel subunit beta-1 (408 aa).

NADP(+) is bound by residues T97, W98, Q104, and D126. Catalysis depends on Y131, which acts as the Proton donor/acceptor. NADP(+) contacts are provided by N199, S229, R230, Q255, W284, S285, P286, L287, A288, C289, K295, R305, G364, S366, Q370, E373, and N374.

It belongs to the shaker potassium channel beta subunit family. Homotetramer. Interaction with tetrameric potassium channel alpha subunits gives rise to a heterooctamer. Identified in potassium channel complexes containing KCNA1, KCNA2, KCNA4, KCNA5, KCNA6, KCNAB1 and KCNAB2. Part of a complex containing KCNA1, KCNA4 and LGI1; interaction with LGI1 inhibits down-regulation of KCNA1 channel activity. Interacts with the dimer formed by GNB1 and GNG2; this enhances KCNA1 binding. Interacts with SQSTM1. As to expression, expression most abundant in aorta. Also high in left ventricle. Also detected in right ventricle, atrium, brain, skeletal muscle and kidney. Not detected in liver.

Its subcellular location is the cytoplasm. It is found in the membrane. It localises to the cell membrane. The catalysed reaction is a primary alcohol + NADP(+) = an aldehyde + NADPH + H(+). It carries out the reaction a secondary alcohol + NADP(+) = a ketone + NADPH + H(+). In terms of biological role, regulatory subunit of the voltage-gated potassium (Kv) Shaker channels composed of pore-forming and potassium-conducting alpha subunits and of regulatory beta subunits. The beta-1/KCNAB1 cytoplasmic subunit mediates closure of delayed rectifier potassium channels by physically obstructing the pore via its N-terminal domain and increases the speed of channel closure for other family members. Promotes the inactivation of Kv1.1/KCNA1, Kv1.2/KCNA2, Kv1.4/KCNA4, Kv1.5/KCNA5 and Kv1.6/KCNA6 alpha subunit-containing channels. Displays nicotinamide adenine dinucleotide phosphate (NADPH)-dependent aldoketoreductase activity by catalyzing the NADPH-dependent reduction of a variety of endogenous aldehydes and ketones. The binding of NADPH is required for efficient down-regulation of potassium channel activity. Oxidation of the bound NADPH restrains N-terminal domain from blocking the channel, thereby decreasing N-type inactivation of potassium channel activity. In Mustela putorius (European polecat), this protein is Voltage-gated potassium channel subunit beta-1 (KCNAB1).